The chain runs to 641 residues: Pumilio homolog 24 (641 aa).

Residues 1–82 (MSSKGLKPQK…LTEARKKKRK (82 aa)) form a disordered region. The 396-residue stretch at 9–404 (QKSTKRKDTD…RPLLQLLHPN (396 aa)) folds into the PUM-HD domain. Basic and acidic residues-rich tracts occupy residues 14-27 (RKDT…DSLK) and 67-76 (RVQAKELTEA). Pumilio repeat units follow at residues 118-153 (KMKG…VLFT), 154-189 (ELQP…ACIS), 190-225 (SLRG…ELLA), 303-340 (QLLT…KIIK), and 341-378 (AMKE…IIVR). The interval 427 to 468 (MDKSETSSKTKDTDGNEIGEETKDEQEDTVAEHSDHEENVTA) is disordered. Residues 428 to 440 (DKSETSSKTKDTD) show a composition bias toward basic and acidic residues. Over residues 441–455 (GNEIGEETKDEQEDT) the composition is skewed to acidic residues. A compositionally biased stretch (basic and acidic residues) spans 456–468 (VAEHSDHEENVTA).

It localises to the nucleus. The protein resides in the nucleolus. Functionally, sequence-specific RNA-binding protein that regulates translation and mRNA stability by binding the 3'-UTR of target mRNAs. The polypeptide is Pumilio homolog 24 (APUM24) (Arabidopsis thaliana (Mouse-ear cress)).